Here is a 628-residue protein sequence, read N- to C-terminus: Phosphomethylpyrimidine synthase (628 aa).

Substrate-binding positions include Asn-228, Met-257, Tyr-286, His-322, 342–344 (SRG), 383–386 (DGLR), and Glu-422. His-426 contacts Zn(2+). Tyr-449 is a binding site for substrate. His-490 provides a ligand contact to Zn(2+). Cys-570, Cys-573, and Cys-578 together coordinate [4Fe-4S] cluster.

It belongs to the ThiC family. As to quaternary structure, homodimer. [4Fe-4S] cluster serves as cofactor.

The enzyme catalyses 5-amino-1-(5-phospho-beta-D-ribosyl)imidazole + S-adenosyl-L-methionine = 4-amino-2-methyl-5-(phosphooxymethyl)pyrimidine + CO + 5'-deoxyadenosine + formate + L-methionine + 3 H(+). Its pathway is cofactor biosynthesis; thiamine diphosphate biosynthesis. In terms of biological role, catalyzes the synthesis of the hydroxymethylpyrimidine phosphate (HMP-P) moiety of thiamine from aminoimidazole ribotide (AIR) in a radical S-adenosyl-L-methionine (SAM)-dependent reaction. This chain is Phosphomethylpyrimidine synthase, found in Methylibium petroleiphilum (strain ATCC BAA-1232 / LMG 22953 / PM1).